Consider the following 372-residue polypeptide: Tribbles homolog 1 (372 aa).

Disordered stretches follow at residues 1 to 26 and 49 to 85; these read MRVG…FPAA and RLSE…CVSS. A compositionally biased stretch (pro residues) spans 59–74; the sequence is YLSPPGSPCSPQPPPS. The Protein kinase domain occupies 91–338; it reads IADYLLLPLA…APQILLHPWF (248 aa). A COP1-binding motif is present at residues 355–360; the sequence is DQIVPE.

This sequence belongs to the protein kinase superfamily. CAMK Ser/Thr protein kinase family. Tribbles subfamily. In terms of assembly, monomer. Interacts (via protein kinase domain) with CEBPA. Interacts with COP1.

In terms of biological role, adapter protein involved in protein degradation by interacting with COP1 ubiquitin ligase. Promotes CEBPA degradation and inhibits its function. Controls macrophage, eosinophil and neutrophil differentiation via the COP1-binding domain. Regulates myeloid cell differentiation by altering the expression of CEBPA in a COP1-dependent manner. Interacts with MAPK kinases and regulates activation of MAP kinases, but has no kinase activity. The polypeptide is Tribbles homolog 1 (Mus musculus (Mouse)).